A 201-amino-acid chain; its full sequence is Lymphocyte antigen 6 complex locus protein G5b (201 aa).

Residues 1 to 18 (MKVHMLVGVLVMVGFTVG) form the signal peptide. Positions 26–118 (RTCHFCLVED…SPQLQSSLPE (93 aa)) constitute a UPAR/Ly6 domain. Cystine bridges form between cysteine 28–cysteine 55, cysteine 31–cysteine 40, cysteine 47–cysteine 73, cysteine 81–cysteine 98, and cysteine 99–cysteine 104. Asparagine 141 and asparagine 183 each carry an N-linked (GlcNAc...) asparagine glycan.

Forms oligomer. In terms of processing, N-glycosylated.

Its subcellular location is the secreted. In Homo sapiens (Human), this protein is Lymphocyte antigen 6 complex locus protein G5b (LY6G5B).